A 37-amino-acid polypeptide reads, in one-letter code: Cytochrome b6-f complex subunit 7 (37 aa).

Residues 11 to 29 (AVILMVLVLFGLAWGFLIL) traverse the membrane as a helical segment.

This sequence belongs to the PetM family. The 4 large subunits of the cytochrome b6-f complex are cytochrome b6, subunit IV (17 kDa polypeptide, PetD), cytochrome f and the Rieske protein, while the 4 small subunits are PetG, PetL, PetM and PetN. The complex functions as a dimer.

The protein resides in the cellular thylakoid membrane. Its function is as follows. Component of the cytochrome b6-f complex, which mediates electron transfer between photosystem II (PSII) and photosystem I (PSI), cyclic electron flow around PSI, and state transitions. The polypeptide is Cytochrome b6-f complex subunit 7 (Crocosphaera subtropica (strain ATCC 51142 / BH68) (Cyanothece sp. (strain ATCC 51142))).